The following is a 312-amino-acid chain: Methionyl-tRNA formyltransferase (312 aa).

(6S)-5,6,7,8-tetrahydrofolate is bound at residue 113-116 (SILP).

It belongs to the Fmt family.

It catalyses the reaction L-methionyl-tRNA(fMet) + (6R)-10-formyltetrahydrofolate = N-formyl-L-methionyl-tRNA(fMet) + (6S)-5,6,7,8-tetrahydrofolate + H(+). Functionally, attaches a formyl group to the free amino group of methionyl-tRNA(fMet). The formyl group appears to play a dual role in the initiator identity of N-formylmethionyl-tRNA by promoting its recognition by IF2 and preventing the misappropriation of this tRNA by the elongation apparatus. This Hydrogenovibrio crunogenus (strain DSM 25203 / XCL-2) (Thiomicrospira crunogena) protein is Methionyl-tRNA formyltransferase.